Reading from the N-terminus, the 157-residue chain is Protein Smg homolog (157 aa).

It belongs to the Smg family.

The sequence is that of Protein Smg homolog from Xanthomonas oryzae pv. oryzae (strain MAFF 311018).